The following is a 245-amino-acid chain: 7-cyano-7-deazaguanine synthase 2 (245 aa).

Residue 12–22 (FSGGQDSTTCL) coordinates ATP. Positions 200, 215, 218, and 221 each coordinate Zn(2+).

It belongs to the QueC family. It depends on Zn(2+) as a cofactor.

The enzyme catalyses 7-carboxy-7-deazaguanine + NH4(+) + ATP = 7-cyano-7-deazaguanine + ADP + phosphate + H2O + H(+). Its pathway is purine metabolism; 7-cyano-7-deazaguanine biosynthesis. Functionally, catalyzes the ATP-dependent conversion of 7-carboxy-7-deazaguanine (CDG) to 7-cyano-7-deazaguanine (preQ(0)). The chain is 7-cyano-7-deazaguanine synthase 2 from Mesorhizobium japonicum (strain LMG 29417 / CECT 9101 / MAFF 303099) (Mesorhizobium loti (strain MAFF 303099)).